The sequence spans 102 residues: Small ribosomal subunit protein uS10 (102 aa).

The segment at 34–58 (VSGPVPLPTKTLEVPSRKSPDGEGT) is disordered.

This sequence belongs to the universal ribosomal protein uS10 family. In terms of assembly, part of the 30S ribosomal subunit.

Involved in the binding of tRNA to the ribosomes. In Halobacterium salinarum (strain ATCC 29341 / DSM 671 / R1), this protein is Small ribosomal subunit protein uS10.